The following is a 174-amino-acid chain: ATP synthase subunit b 2 (174 aa).

A helical transmembrane segment spans residues 27–47 (IFWLIITLVAIYLILTKVALP).

The protein belongs to the ATPase B chain family. As to quaternary structure, F-type ATPases have 2 components, F(1) - the catalytic core - and F(0) - the membrane proton channel. F(1) has five subunits: alpha(3), beta(3), gamma(1), delta(1), epsilon(1). F(0) has three main subunits: a(1), b(2) and c(10-14). The alpha and beta chains form an alternating ring which encloses part of the gamma chain. F(1) is attached to F(0) by a central stalk formed by the gamma and epsilon chains, while a peripheral stalk is formed by the delta and b chains.

The protein resides in the cell inner membrane. Functionally, f(1)F(0) ATP synthase produces ATP from ADP in the presence of a proton or sodium gradient. F-type ATPases consist of two structural domains, F(1) containing the extramembraneous catalytic core and F(0) containing the membrane proton channel, linked together by a central stalk and a peripheral stalk. During catalysis, ATP synthesis in the catalytic domain of F(1) is coupled via a rotary mechanism of the central stalk subunits to proton translocation. In terms of biological role, component of the F(0) channel, it forms part of the peripheral stalk, linking F(1) to F(0). The b'-subunit is a diverged and duplicated form of b found in plants and photosynthetic bacteria. The protein is ATP synthase subunit b 2 (atpF2) of Dinoroseobacter shibae (strain DSM 16493 / NCIMB 14021 / DFL 12).